The following is a 630-amino-acid chain: MKKFSLISDYDVYLFKEGTHTRLYDKLGSHVIELNGKRYTFFAVWAPHADYVSLIGDFNEWDKGSTPMVKREDGSGIWEVLLEGDLTGSKYKYFIKNGNYEVDKSDPFAFFCEQPPGNASVVWKLNYRWNDSEYMKKRKRVNSHDSPISIYEVHVGSWRRVPEEGNRFLSYRELAEYLPYYVKEMGFTHVEFLPVMEHPFYGSWGYQITGYFAPTSRYGTPQDFMYLIDKLHQEGIGVILDWVPSHFPTDAHGLAYFDGTHLYEYEDWRKRWHPDWNSFVFDYGKPEVRSFLLSSAHFWLDKYHADGLRVDAVASMLYLDYSRKEWVPNIYGGKENLEAIEFLRKFNESVYRNFPDVQTIAEESTAWPMVSRPTYVGGLGFGMKWNMGWMNDTLFYFSKDPIYRKYHHEVLTFSIWYAFSENFVLPLSHDEVVHGKGSLIGKMPGDYWQKFANLRALFGYMWAHPGKKLLFMGGEFGQFKEWDHETSLDWHLLEYPSHRGIQRLVKDLNEVYRREKALHETDFSPEGFEWVDFHDWEKSVISFLRKDKSGKEIILVVCNFTPVPRYDYRVGVPKGGYWREIMNTDAKEYWGSGMGNLGGKEADKIPWHGRKFSLSLTLPPLSVIYLKHEG.

D311 functions as the Nucleophile in the catalytic mechanism. The Proton donor role is filled by E362.

It belongs to the glycosyl hydrolase 13 family. GlgB subfamily. As to quaternary structure, monomer.

The enzyme catalyses Transfers a segment of a (1-&gt;4)-alpha-D-glucan chain to a primary hydroxy group in a similar glucan chain.. It participates in glycan biosynthesis; glycogen biosynthesis. In terms of biological role, catalyzes the formation of the alpha-1,6-glucosidic linkages in glycogen by scission of a 1,4-alpha-linked oligosaccharide from growing alpha-1,4-glucan chains and the subsequent attachment of the oligosaccharide to the alpha-1,6 position. The protein is 1,4-alpha-glucan branching enzyme GlgB of Aquifex aeolicus (strain VF5).